The following is a 1371-amino-acid chain: F-actin-uncapping protein LRRC16A (1371 aa).

Met1 carries the N-acetylmethionine modification. Phosphoserine is present on Ser122. 10 LRR repeats span residues 245-269 (SNRLEELVLENAGLRTDFAQKLASA), 275-298 (NSGLHTINLAGNPLEDRGVSSLSI), 304-327 (PKGLKHLNLSKTSLSPKGVNSLSQ), 336-363 (ASTLVHLDLSGNVLRGDDLSHMYNFLAQ), 391-418 (LQYLAVLNLSRTVFSHRKGKEVPPSFKQ), 423-447 (SLALMHINLSGTKLSPEPLKALLLG), 481-506 (IHNITSLDISDNGLESDLSTLIVWLS), 543-566 (ESPLQSLSLADSKLKTEVTIIINA), 570-593 (NTSLTKVDISGNGMGDMGAKMLAK), and 654-678 (LQKIENYLLRNHETRKYLQEQAYRL). Residues 710 to 734 (GDAIQEDLKSAERLMRDAKNSKTLL) adopt a coiled-coil conformation. Thr916 is subject to Phosphothreonine. Disordered regions lie at residues 957-1000 (PFPS…QPTQ), 1036-1159 (KMDS…RRYG), and 1172-1371 (KAKQ…FIFV). The LRR 11 repeat unit spans residues 958-981 (FPSLRQEKRSSGFISELPSEEGKK). The tract at residues 958-1082 (FPSLRQEKRS…LIKSRSKSER (125 aa)) is inhibits capping activity of CAPZA2. Ser968 is subject to Phosphoserine. Basic and acidic residues-rich tracts occupy residues 977-986 (EEGKKLEHFT) and 1036-1061 (KMDSKKWSTRGSESHELNEGGDEKKK). The tract at residues 1055-1089 (GGDEKKKRDSRKSSGFLNLIKSRSKSERPPTILMT) is necessary for localization at the cell membrane. 2 positions are modified to phosphoserine: Ser1067 and Ser1094. Basic and acidic residues-rich tracts occupy residues 1106–1130 (CPRKDTKAAEHNGNSERIEEIKTPD) and 1139–1148 (EIGKVERSDS). Positions 1190 to 1199 (AVSQDSSSPA) are enriched in polar residues. Thr1228 is modified (phosphothreonine). Residues 1231 to 1243 (KNTKAEPKAEAGS) are compositionally biased toward basic and acidic residues. The segment covering 1244 to 1265 (RSRSSSSTPTSPKPLLQSPKPS) has biased composition (low complexity). Phosphoserine occurs at positions 1280, 1288, 1291, 1315, 1324, and 1331. Over residues 1313-1326 (QSSPQPSPRTFSQE) the composition is skewed to polar residues. Residues 1340 to 1353 (QEQKQRSSSKDGHQ) are compositionally biased toward basic and acidic residues. Ser1360 is modified (phosphoserine).

It belongs to the CARMIL family. Homodimer. Interacts (via C-terminus) with heterodimer capping protein (CP); this interaction uncaps barbed ends capped by CP, enhances barbed-end actin polymerization and promotes lamellipodial formation and cell migration. Interacts with heterodimer capping protein (CP). Interacts with MYO1E. Interacts with TRIO. Expressed in lung, placenta, small intestine, liver, thymus, colon, skeletal muscle, heart and brain. Higher expression in kidney.

The protein resides in the cytoplasm. It localises to the cytoskeleton. The protein localises to the cell membrane. Its subcellular location is the cell projection. It is found in the lamellipodium. Functionally, cell membrane-cytoskeleton-associated protein that plays a role in the regulation of actin polymerization at the barbed end of actin filaments. Prevents F-actin heterodimeric capping protein (CP) activity at the leading edges of migrating cells, and hence generates uncapped barbed ends and enhances actin polymerization, however, seems unable to nucleate filaments. Plays a role in lamellipodial protrusion formations and cell migration. This Homo sapiens (Human) protein is F-actin-uncapping protein LRRC16A.